The sequence spans 126 residues: Fluoride-specific ion channel FluC (126 aa).

Helical transmembrane passes span 3–23 (MILA…LTGV), 39–59 (TVNV…AHVW), 71–91 (VGVL…ALLV), and 101–121 (AYVA…LALI). Residues G75 and T78 each contribute to the Na(+) site.

The protein belongs to the fluoride channel Fluc/FEX (TC 1.A.43) family.

Its subcellular location is the cell inner membrane. It carries out the reaction fluoride(in) = fluoride(out). With respect to regulation, na(+) is not transported, but it plays an essential structural role and its presence is essential for fluoride channel function. Fluoride-specific ion channel. Important for reducing fluoride concentration in the cell, thus reducing its toxicity. The polypeptide is Fluoride-specific ion channel FluC (Rhodospirillum centenum (strain ATCC 51521 / SW)).